The primary structure comprises 598 residues: Thiol:disulfide interchange protein DsbD (598 aa).

Residues 1–19 form the signal peptide; that stretch reads MAYRIITLILLLCSTSATA. An intrachain disulfide couples Cys-122 to Cys-128. Positions 147–187 are disordered; the sequence is DGQATAIEPMPSTSSRPAFNPPLPVEPRPAPELATSPAPAA. Over residues 165 to 176 the composition is skewed to pro residues; that stretch reads FNPPLPVEPRPA. The next 7 membrane-spanning stretches (helical) occupy residues 197–217, 242–262, 277–297, 330–350, 356–376, 391–411, and 423–443; these read LPFT…TPCV, LLAF…GLVV, YVLV…FGLF, IAGL…LLYI, LWLG…PLIL, WMSH…VFLL, and LWSM…LGAT. A disulfide bridge links Cys-216 with Cys-338. The 140-residue stretch at 459–598 folds into the Thioredoxin domain; sequence LVSARPLQDW…FSAHLRDWQA (140 aa). Cys-513 and Cys-516 are oxidised to a cystine.

Belongs to the thioredoxin family. DsbD subfamily.

The protein resides in the cell inner membrane. It carries out the reaction [protein]-dithiol + NAD(+) = [protein]-disulfide + NADH + H(+). The catalysed reaction is [protein]-dithiol + NADP(+) = [protein]-disulfide + NADPH + H(+). Required to facilitate the formation of correct disulfide bonds in some periplasmic proteins and for the assembly of the periplasmic c-type cytochromes. Acts by transferring electrons from cytoplasmic thioredoxin to the periplasm. This transfer involves a cascade of disulfide bond formation and reduction steps. The polypeptide is Thiol:disulfide interchange protein DsbD (Klebsiella pneumoniae subsp. pneumoniae (strain ATCC 700721 / MGH 78578)).